We begin with the raw amino-acid sequence, 631 residues long: 1-deoxy-D-xylulose-5-phosphate synthase (631 aa).

Thiamine diphosphate contacts are provided by residues His87 and 128–130; that span reads GHS. Residue Asp159 participates in Mg(2+) binding. Residues 160-161, Asn188, Phe295, and Glu377 contribute to the thiamine diphosphate site; that span reads GA. Asn188 lines the Mg(2+) pocket.

The protein belongs to the transketolase family. DXPS subfamily. In terms of assembly, homodimer. Requires Mg(2+) as cofactor. Thiamine diphosphate is required as a cofactor.

It catalyses the reaction D-glyceraldehyde 3-phosphate + pyruvate + H(+) = 1-deoxy-D-xylulose 5-phosphate + CO2. It participates in metabolic intermediate biosynthesis; 1-deoxy-D-xylulose 5-phosphate biosynthesis; 1-deoxy-D-xylulose 5-phosphate from D-glyceraldehyde 3-phosphate and pyruvate: step 1/1. Catalyzes the acyloin condensation reaction between C atoms 2 and 3 of pyruvate and glyceraldehyde 3-phosphate to yield 1-deoxy-D-xylulose-5-phosphate (DXP). The chain is 1-deoxy-D-xylulose-5-phosphate synthase from Pseudomonas putida (strain ATCC 700007 / DSM 6899 / JCM 31910 / BCRC 17059 / LMG 24140 / F1).